The following is a 187-amino-acid chain: Large ribosomal subunit protein uL6 (187 aa).

Residues 159–187 (PYKGKGIRYKGEQLSSNPERLQVRSKEVR) form a disordered region.

It belongs to the universal ribosomal protein uL6 family. In terms of assembly, part of the 50S ribosomal subunit.

Its function is as follows. This protein binds to the 23S rRNA, and is important in its secondary structure. It is located near the subunit interface in the base of the L7/L12 stalk, and near the tRNA binding site of the peptidyltransferase center. This Aquifex pyrophilus protein is Large ribosomal subunit protein uL6.